The primary structure comprises 161 residues: PRS fimbrial major pilin protein (161 aa).

Belongs to the fimbrial protein family.

The protein localises to the secreted. The protein resides in the fimbrium. Fimbriae (also called pili), polar filaments radiating from the surface of the bacterium to a length of 0.5-1.5 micrometers and numbering 100-300 per cell, enable bacteria to colonize the epithelium of specific host organs. In Escherichia coli, this protein is PRS fimbrial major pilin protein (prsA).